Here is a 173-residue protein sequence, read N- to C-terminus: CKLF-like MARVEL transmembrane domain-containing protein 8 (173 aa).

The 133-residue stretch at 36-168 (FLRTPPGLLI…NTYFSFIAWR (133 aa)) folds into the MARVEL domain. Transmembrane regions (helical) follow at residues 41 to 61 (PGLL…LIAG), 70 to 90 (FGWV…FLIV), 105 to 125 (TTVG…AAIV), and 147 to 167 (FFAF…FIAW).

It belongs to the chemokine-like factor family.

The protein localises to the membrane. The chain is CKLF-like MARVEL transmembrane domain-containing protein 8 (Cmtm8) from Mus musculus (Mouse).